Reading from the N-terminus, the 345-residue chain is Phosphate acyltransferase (345 aa).

The protein belongs to the PlsX family. In terms of assembly, homodimer. Probably interacts with PlsY.

It localises to the cytoplasm. The catalysed reaction is a fatty acyl-[ACP] + phosphate = an acyl phosphate + holo-[ACP]. The protein operates within lipid metabolism; phospholipid metabolism. Functionally, catalyzes the reversible formation of acyl-phosphate (acyl-PO(4)) from acyl-[acyl-carrier-protein] (acyl-ACP). This enzyme utilizes acyl-ACP as fatty acyl donor, but not acyl-CoA. In Wolbachia pipientis subsp. Culex pipiens (strain wPip), this protein is Phosphate acyltransferase.